We begin with the raw amino-acid sequence, 432 residues long: Trigger factor (432 aa).

The region spanning 161–246 (EDRVTLDFTG…LKKVEERELP (86 aa)) is the PPIase FKBP-type domain.

The protein belongs to the FKBP-type PPIase family. Tig subfamily.

Its subcellular location is the cytoplasm. It catalyses the reaction [protein]-peptidylproline (omega=180) = [protein]-peptidylproline (omega=0). In terms of biological role, involved in protein export. Acts as a chaperone by maintaining the newly synthesized protein in an open conformation. Functions as a peptidyl-prolyl cis-trans isomerase. The chain is Trigger factor from Salmonella arizonae (strain ATCC BAA-731 / CDC346-86 / RSK2980).